Reading from the N-terminus, the 84-residue chain is Defensin-like protein 37 (84 aa).

Residues methionine 1–serine 24 form the signal peptide. Cystine bridges form between cysteine 46–cysteine 67, cysteine 52–cysteine 79, and cysteine 56–cysteine 81.

Belongs to the DEFL family.

It localises to the secreted. The sequence is that of Defensin-like protein 37 (EDA21) from Arabidopsis thaliana (Mouse-ear cress).